Here is a 167-residue protein sequence, read N- to C-terminus: Small ribosomal subunit protein uS5 (167 aa).

The S5 DRBM domain maps to 12–75; sequence LQEKLIAVNR…EKARRNIVTV (64 aa).

Belongs to the universal ribosomal protein uS5 family. Part of the 30S ribosomal subunit. Contacts proteins S4 and S8.

Functionally, with S4 and S12 plays an important role in translational accuracy. In terms of biological role, located at the back of the 30S subunit body where it stabilizes the conformation of the head with respect to the body. The sequence is that of Small ribosomal subunit protein uS5 from Shewanella baltica (strain OS223).